The chain runs to 91 residues: Small ribosomal subunit protein uS19 (91 aa).

The protein belongs to the universal ribosomal protein uS19 family.

Functionally, protein S19 forms a complex with S13 that binds strongly to the 16S ribosomal RNA. This chain is Small ribosomal subunit protein uS19, found in Chromohalobacter salexigens (strain ATCC BAA-138 / DSM 3043 / CIP 106854 / NCIMB 13768 / 1H11).